Consider the following 434-residue polypeptide: KH domain-containing protein 3 (434 aa).

An involved in RNA binding region spans residues Met-1–Glu-39. The region spanning Asp-40 to Ala-118 is the KH; atypical domain. Residues Thr-267 and Thr-279 each carry the phosphothreonine modification. Residues Val-334 to Leu-434 form a required for interaction with NUMA1 and regulation of apoptosis in response to DNA damage region.

This sequence belongs to the KHDC1 family. As to quaternary structure, component of the subcortical maternal complex (SCMC), at least composed of NLRP5, KHDC3, OOEP, and TLE6. Within the complex, interacts with NLRP5, KHDC3 and TLE6. The SCMC may facilitate translocation of its components between the nuclear and cytoplasmic compartments. Forms a scaffold complex with OOEP/FLOPED, and interacts with BLM and TRIM25 at DNA replication forks. Interacts with PARP1; the interaction is increased following the formation of DNA double-strand breaks. Interacts (via C-terminus) with NUMA1.

The protein resides in the cytoplasm. It localises to the cell cortex. Its subcellular location is the nucleus. The protein localises to the mitochondrion. It is found in the cytoskeleton. The protein resides in the microtubule organizing center. It localises to the centrosome. Its subcellular location is the chromosome. In terms of biological role, component of the subcortical maternal complex (SCMC), a multiprotein complex that plays a key role in early embryonic development. The SCMC complex is a structural constituent of cytoplasmic lattices, which consist in fibrous structures found in the cytoplasm of oocytes and preimplantation embryos. They are required to store maternal proteins critical for embryonic development, such as proteins that control epigenetic reprogramming of the preimplantation embryo, and prevent their degradation or activation. KHDC3 ensures proper spindle assembly by regulating the localization of AURKA via RHOA signaling and of PLK1 via a RHOA-independent process. Required for the localization of MAD2L1 to kinetochores to enable spindle assembly checkpoint function. As part of the OOEP-KHDC3 scaffold, recruits BLM and TRIM25 to DNA replication forks, thereby promoting the ubiquitination of BLM by TRIM25, enhancing BLM retainment at replication forks and therefore promoting stalled replication fork restart. Regulates homologous recombination-mediated DNA repair via recruitment of RAD51 to sites of DNA double-strand breaks, and sustainment of PARP1 activity, which in turn modulates downstream ATM or ATR activation. Activation of ATM or ATR in response to DNA double-strand breaks may be cell-type specific. Its role in DNA double-strand break repair is independent of its role in restarting stalled replication forks. Promotes neural stem cell neurogenesis and neuronal differentiation in the hippocampus. May regulate normal development of learning, memory and anxiety. Capable of binding RNA. The protein is KH domain-containing protein 3 of Rattus norvegicus (Rat).